Consider the following 84-residue polypeptide: Limulin (84 aa).

The Pentraxin (PTX) domain maps to 6-84 (ITSKVKFPPS…DEQGDFLFNV (79 aa)). Residues Asp67 and Asn68 each coordinate Ca(2+).

This sequence belongs to the pentraxin family. Homopentamer. Pentraxin (or pentaxin) have a discoid arrangement of 5 non-covalently bound subunits. It depends on Ca(2+) as a cofactor. Post-translationally, a disulfide bond links Cys-38 to a Cys in the C-terminal half of the chain of 163 residues.

Functionally, lectin that binds sialic acid. Displays antiviral activity and therefore may contribute to defense against infections. This chain is Limulin, found in Limulus polyphemus (Atlantic horseshoe crab).